The primary structure comprises 172 residues: Protein GrpE (172 aa).

The protein belongs to the GrpE family. Homodimer.

The protein localises to the cytoplasm. In terms of biological role, participates actively in the response to hyperosmotic and heat shock by preventing the aggregation of stress-denatured proteins, in association with DnaK and GrpE. It is the nucleotide exchange factor for DnaK and may function as a thermosensor. Unfolded proteins bind initially to DnaJ; upon interaction with the DnaJ-bound protein, DnaK hydrolyzes its bound ATP, resulting in the formation of a stable complex. GrpE releases ADP from DnaK; ATP binding to DnaK triggers the release of the substrate protein, thus completing the reaction cycle. Several rounds of ATP-dependent interactions between DnaJ, DnaK and GrpE are required for fully efficient folding. This is Protein GrpE from Thermotoga sp. (strain RQ2).